Consider the following 968-residue polypeptide: Isoleucine--tRNA ligase (968 aa).

A 'HIGH' region motif is present at residues 68–78 (PYANGALHMGH). E582 serves as a coordination point for L-isoleucyl-5'-AMP. The 'KMSKS' region motif lies at 623 to 627 (KMSKS). K626 is a binding site for ATP. Zn(2+) contacts are provided by C936, C939, C956, and C959.

It belongs to the class-I aminoacyl-tRNA synthetase family. IleS type 1 subfamily. Monomer. Zn(2+) is required as a cofactor.

Its subcellular location is the cytoplasm. It catalyses the reaction tRNA(Ile) + L-isoleucine + ATP = L-isoleucyl-tRNA(Ile) + AMP + diphosphate. Catalyzes the attachment of isoleucine to tRNA(Ile). As IleRS can inadvertently accommodate and process structurally similar amino acids such as valine, to avoid such errors it has two additional distinct tRNA(Ile)-dependent editing activities. One activity is designated as 'pretransfer' editing and involves the hydrolysis of activated Val-AMP. The other activity is designated 'posttransfer' editing and involves deacylation of mischarged Val-tRNA(Ile). The protein is Isoleucine--tRNA ligase of Prochlorococcus marinus (strain AS9601).